The primary structure comprises 150 residues: MSTRWYPIYQRGNPQLRVFLPNFWMKLIRPTEEQPPNVVTFSVSMEMTKYDVRNYLEKIYKLPVVDVRTRIAMGETKKDQTYGYITKKDDVKLAYVTLPREESFVFPDFFSEKAEKQAKEEKSLDESKAGFRRFLDRNKKRPGTPGWFSI.

Belongs to the universal ribosomal protein uL23 family. Component of the mitochondrial ribosome large subunit (39S) which comprises a 16S rRNA and about 50 distinct proteins.

The protein localises to the mitochondrion. The chain is Large ribosomal subunit protein uL23m (mRpL23) from Drosophila melanogaster (Fruit fly).